A 167-amino-acid polypeptide reads, in one-letter code: Putative N-acetylgalactosamine-6-phosphate deacetylase (167 aa).

It belongs to the metallo-dependent hydrolases superfamily. NagA family.

It carries out the reaction N-acetyl-D-galactosamine 6-phosphate + H2O = D-galactosamine 6-phosphate + acetate. The polypeptide is Putative N-acetylgalactosamine-6-phosphate deacetylase (agaA) (Escherichia coli (strain K12)).